We begin with the raw amino-acid sequence, 276 residues long: Urease accessory protein UreD (276 aa).

The protein belongs to the UreD family. UreD, UreF and UreG form a complex that acts as a GTP-hydrolysis-dependent molecular chaperone, activating the urease apoprotein by helping to assemble the nickel containing metallocenter of UreC. The UreE protein probably delivers the nickel.

Its subcellular location is the cytoplasm. In terms of biological role, required for maturation of urease via the functional incorporation of the urease nickel metallocenter. The polypeptide is Urease accessory protein UreD (Paracidovorax citrulli (strain AAC00-1) (Acidovorax citrulli)).